A 182-amino-acid chain; its full sequence is Riboflavin kinase (182 aa).

Residues Thr-39 and Asn-41 each contribute to the Mg(2+) site. Residue Glu-117 is the Nucleophile of the active site.

The protein belongs to the flavokinase family. The cofactor is Zn(2+). Mg(2+) is required as a cofactor.

It carries out the reaction riboflavin + ATP = FMN + ADP + H(+). The protein operates within cofactor biosynthesis; FMN biosynthesis; FMN from riboflavin (ATP route): step 1/1. In terms of biological role, catalyzes the phosphorylation of riboflavin (vitamin B2) to form flavin mononucleotide (FMN) coenzyme. The polypeptide is Riboflavin kinase (FMN1) (Lodderomyces elongisporus (strain ATCC 11503 / CBS 2605 / JCM 1781 / NBRC 1676 / NRRL YB-4239) (Yeast)).